The following is a 206-amino-acid chain: Ras-related protein RABG3e (206 aa).

GTP is bound at residue 15-22 (GDSGVGKT). Positions 37-45 (YKATIGADF) match the Effector region motif. GTP is bound by residues 63–67 (DTAGQ), 125–128 (NKID), and 158–159 (SA). 2 S-geranylgeranyl cysteine lipidation sites follow: cysteine 204 and cysteine 206. Cysteine methyl ester is present on cysteine 206.

This sequence belongs to the small GTPase superfamily. Rab family.

Its subcellular location is the cell membrane. Its function is as follows. Intracellular vesicle trafficking and protein transport. May play a role in adaptation to stress by recylcing macromolecules in specific cellular compartments. The polypeptide is Ras-related protein RABG3e (RABG3E) (Arabidopsis thaliana (Mouse-ear cress)).